The primary structure comprises 359 residues: DNA replication and repair protein RecF (359 aa).

ATP is bound at residue 30–37; it reads GPNGSGKT.

It belongs to the RecF family.

It is found in the cytoplasm. In terms of biological role, the RecF protein is involved in DNA metabolism; it is required for DNA replication and normal SOS inducibility. RecF binds preferentially to single-stranded, linear DNA. It also seems to bind ATP. In Vibrio vulnificus (strain YJ016), this protein is DNA replication and repair protein RecF.